Consider the following 406-residue polypeptide: Argininosuccinate synthase (406 aa).

8–16 (AYSGGLDTS) serves as a coordination point for ATP. Tyrosine 86 is an L-citrulline binding site. Glycine 116 provides a ligand contact to ATP. Positions 118, 122, and 123 each coordinate L-aspartate. An L-citrulline-binding site is contributed by asparagine 122. Arginine 126, serine 174, serine 183, glutamate 259, and tyrosine 271 together coordinate L-citrulline.

It belongs to the argininosuccinate synthase family. Type 1 subfamily. Homotetramer.

It is found in the cytoplasm. It carries out the reaction L-citrulline + L-aspartate + ATP = 2-(N(omega)-L-arginino)succinate + AMP + diphosphate + H(+). Its pathway is amino-acid biosynthesis; L-arginine biosynthesis; L-arginine from L-ornithine and carbamoyl phosphate: step 2/3. This is Argininosuccinate synthase from Dehalococcoides mccartyi (strain ATCC BAA-2100 / JCM 16839 / KCTC 5957 / BAV1).